A 175-amino-acid polypeptide reads, in one-letter code: Replication restart protein PriC (175 aa).

It belongs to the PriC family. In terms of assembly, monomer. Oligomerizes in the absence of DNA. Component of the replication restart primosome, which is composed of PriA, PriB, PriC, DnaB and DnaT; DnaG primase associates transiently with this complex. Interacts with the C-terminus of SSB; this interaction is required for DnaB loading onto substrate replication forks. Interacts with DnaB alone and in the DnaB-DnaC complex, probably 1:1 binding with DnaB.

Involved in the restart of stalled replication forks, which reloads the replicative helicase (DnaB) on sites other than the origin of replication. Recognizes abandoned replication forks and remodels DNA single-stranded binding protein (SSB) on ssDNA to uncover a loading site for DnaB. There are several restart pathways, the PriA-PriC pathway is a minor restart pathway. Also part of the minor PriC-Rep pathway for restart of stalled replication forks, which has a different substrate specificity than PriA. priB and priC have redundant roles in the cell. Stimulates the 3'-5' helicase activity of Rep helicase in vitro. In vitro can load the DnaB replicative helicase from a DnaB-DnaC complex on an SSB-coated stalled replication fork with no leading- or lagging-strand (or with a gap between the leading strand and fork junction) in the absence of other primosome proteins (PriA, PriB or DnaT). Also part of the major restart pathway with PriA, PriB, DnaB, DnaT and DnaG primase. PriC may contribute to the stability of the preprimosome complex. Preferentially binds approximately 7-9 nucleotides of single-stranded (ss)DNA, also binds double-stranded (ds)DNA. PriB is probably more important in the cell than PriC. In Escherichia coli (strain K12), this protein is Replication restart protein PriC.